The following is a 287-amino-acid chain: Putative ankyrin repeat protein R791 (287 aa).

7 ANK repeats span residues 40–71, 76–105, 107–134, 135–164, 165–194, 196–224, and 225–254; these read HNFNVLHEVIKRGYVHILKYVDELENLGPLVF, NVHDKLKLACNHDQLPIVKYLVETNSNIET, NDDVIITASFYGRTNIVEYFIKKDIDNK, TIFEALKNACDNGHLETMILLINNGVDIKA, KDNFIIKQAISKGHLNIVKYLVENGATIDI, DDTYIINSAQKGYYKMVEYLVYRGADYRT, and VDDLPIRCALMGGHLDVVKYLQSLGADIEA.

The protein is Putative ankyrin repeat protein R791 of Acanthamoeba polyphaga (Amoeba).